The sequence spans 89 residues: Alpha-latrotoxin associated low molecular weight protein SGV242-280 (89 aa).

The N-terminal stretch at 1-18 (MSKLHFLILLSVIVSVFC) is a signal peptide.

Belongs to the arthropod CHH/MIH/GIH/VIH hormone family. In terms of tissue distribution, expressed by the venom gland.

It is found in the secreted. May increase the toxicity of alpha-latrotoxin and/or other venom components. Is non-toxic to mice and to the cockroach Periplaneta americana. This Steatoda grossa (False black widow) protein is Alpha-latrotoxin associated low molecular weight protein SGV242-280.